The chain runs to 239 residues: MPGAIRDLINPVSSAASASKEDTVNNVFFLEKDLFPGSKMTLHFTRATAGAALLPRGRADSVPFASEKLPEILSQLSVPAGSPAADAMRSTLAECEAAPQAGEAKRCATSLESMVEFAASSLGTRDVHAVSTEVDRAGPTPRQAYRVEAVRPVPVSGGDMVACHGMAYAYAVFGCHTTTAAAYTVTLAGADGTKAEALAACHTDAAPRVAEAYKRLGVAPGSVPVCHFLPQDDMLWVRN.

Residues 1 to 19 (MPGAIRDLINPVSSAASAS) form the signal peptide. The region spanning 28 to 239 (FFLEKDLFPG…PQDDMLWVRN (212 aa)) is the BURP domain.

As to expression, expressed in leaves and shoot.

This Oryza sativa subsp. japonica (Rice) protein is BURP domain-containing protein 6 (BURP6).